We begin with the raw amino-acid sequence, 237 residues long: 4'-phosphopantetheinyl transferase HetI (237 aa).

Positions 128, 130, and 174 each coordinate Mg(2+).

The protein belongs to the P-Pant transferase superfamily. Gsp/Sfp/HetI/AcpT family. Requires Mg(2+) as cofactor.

It catalyses the reaction apo-[peptidyl-carrier protein] + CoA = holo-[peptidyl-carrier protein] + adenosine 3',5'-bisphosphate + H(+). Probably activates the acyl carrier protein (ACP) domain of HetM, by transferring the 4'-phosphopantetheinyl moiety of coenzyme A (CoA) to a serine residue. May be required for maintaining vegetative growth and probably acts via HetN to inhibit differentiation. This is 4'-phosphopantetheinyl transferase HetI (hetI) from Nostoc sp. (strain PCC 7120 / SAG 25.82 / UTEX 2576).